A 465-amino-acid polypeptide reads, in one-letter code: Glutamate--tRNA ligase (465 aa).

The 'HIGH' region motif lies at 11–21; it reads PSPTGFIHLGN. The segment covering 120–131 has biased composition (basic and acidic residues); sequence KPRYDGTWRPEP. Residues 120 to 139 form a disordered region; it reads KPRYDGTWRPEPGKVLPTPP. A 'KMSKS' region motif is present at residues 243 to 247; sequence KMSKR. Residue Lys246 participates in ATP binding.

The protein belongs to the class-I aminoacyl-tRNA synthetase family. Glutamate--tRNA ligase type 1 subfamily. In terms of assembly, monomer.

Its subcellular location is the cytoplasm. The enzyme catalyses tRNA(Glu) + L-glutamate + ATP = L-glutamyl-tRNA(Glu) + AMP + diphosphate. Functionally, catalyzes the attachment of glutamate to tRNA(Glu) in a two-step reaction: glutamate is first activated by ATP to form Glu-AMP and then transferred to the acceptor end of tRNA(Glu). The protein is Glutamate--tRNA ligase of Ralstonia nicotianae (strain ATCC BAA-1114 / GMI1000) (Ralstonia solanacearum).